The chain runs to 251 residues: 5'-nucleotidase SurE (251 aa).

Residues Asp-8, Asp-9, Ser-39, and Asn-90 each coordinate a divalent metal cation.

It belongs to the SurE nucleotidase family. A divalent metal cation serves as cofactor.

The protein resides in the cytoplasm. It catalyses the reaction a ribonucleoside 5'-phosphate + H2O = a ribonucleoside + phosphate. Functionally, nucleotidase that shows phosphatase activity on nucleoside 5'-monophosphates. This Legionella pneumophila subsp. pneumophila (strain Philadelphia 1 / ATCC 33152 / DSM 7513) protein is 5'-nucleotidase SurE.